The chain runs to 72 residues: Small ribosomal subunit protein bS18 (72 aa).

Belongs to the bacterial ribosomal protein bS18 family. In terms of assembly, part of the 30S ribosomal subunit. Forms a tight heterodimer with protein bS6.

In terms of biological role, binds as a heterodimer with protein bS6 to the central domain of the 16S rRNA, where it helps stabilize the platform of the 30S subunit. The protein is Small ribosomal subunit protein bS18 of Francisella tularensis subsp. holarctica (strain OSU18).